A 119-amino-acid polypeptide reads, in one-letter code: Beta-2-microglobulin (119 aa).

The signal sequence occupies residues 1–20 (MARSVVVALLVLLSLSGLEA). Residues 25–114 (PKIQVYSRHP…VTFPTPKTVK (90 aa)) form the Ig-like C1-type domain. The cysteines at positions 45 and 100 are disulfide-linked.

Belongs to the beta-2-microglobulin family. In terms of assembly, heterodimer of an alpha chain and a beta chain. Beta-2-microglobulin is the beta-chain of major histocompatibility complex class I molecules.

It is found in the secreted. Functionally, component of the class I major histocompatibility complex (MHC). Involved in the presentation of peptide antigens to the immune system. This Lagothrix lagotricha (Brown woolly monkey) protein is Beta-2-microglobulin (B2M).